A 147-amino-acid chain; its full sequence is Large ribosomal subunit protein uL15 (147 aa).

Residues 1 to 45 are disordered; that stretch reads MTIKLHHLRPAPGAKSDKIRVGRGEGGKRGKTAGRGTKGTKARKN. Basic and acidic residues predominate over residues 15–28; it reads KSDKIRVGRGEGGK.

It belongs to the universal ribosomal protein uL15 family. Part of the 50S ribosomal subunit.

Binds to the 23S rRNA. The sequence is that of Large ribosomal subunit protein uL15 from Rhodococcus jostii (strain RHA1).